The sequence spans 22 residues: 5-methyltetrahydropteroyltriglutamate--homocysteine methyltransferase (22 aa).

The protein belongs to the vitamin-B12 independent methionine synthase family. Requires Zn(2+) as cofactor.

Its subcellular location is the cytoplasm. The enzyme catalyses 5-methyltetrahydropteroyltri-L-glutamate + L-homocysteine = tetrahydropteroyltri-L-glutamate + L-methionine. Its pathway is amino-acid biosynthesis; L-methionine biosynthesis via de novo pathway; L-methionine from L-homocysteine (MetE route): step 1/1. Its function is as follows. Catalyzes the transfer of a methyl group from 5-methyltetrahydrofolate to homocysteine resulting in methionine formation. The sequence is that of 5-methyltetrahydropteroyltriglutamate--homocysteine methyltransferase from Pseudotsuga menziesii (Douglas-fir).